Here is a 180-residue protein sequence, read N- to C-terminus: UPF0227 protein YcfP (180 aa).

It belongs to the UPF0227 family.

This chain is UPF0227 protein YcfP, found in Salmonella gallinarum (strain 287/91 / NCTC 13346).